We begin with the raw amino-acid sequence, 119 residues long: Ribonuclease P protein component (119 aa).

This sequence belongs to the RnpA family. In terms of assembly, consists of a catalytic RNA component (M1 or rnpB) and a protein subunit.

The enzyme catalyses Endonucleolytic cleavage of RNA, removing 5'-extranucleotides from tRNA precursor.. RNaseP catalyzes the removal of the 5'-leader sequence from pre-tRNA to produce the mature 5'-terminus. It can also cleave other RNA substrates such as 4.5S RNA. The protein component plays an auxiliary but essential role in vivo by binding to the 5'-leader sequence and broadening the substrate specificity of the ribozyme. This chain is Ribonuclease P protein component, found in Bacillus cereus (strain ZK / E33L).